A 274-amino-acid polypeptide reads, in one-letter code: Large ribosomal subunit protein uL2cz/uL2cy (274 aa).

2 disordered regions span residues 1-21 (MAIH…VDSQ) and 225-254 (PVDH…PALG).

It belongs to the universal ribosomal protein uL2 family. Part of the 50S ribosomal subunit.

The protein resides in the plastid. The protein localises to the chloroplast. The protein is Large ribosomal subunit protein uL2cz/uL2cy (rpl2-A) of Draba nemorosa (Woodland whitlowgrass).